We begin with the raw amino-acid sequence, 131 residues long: Large ribosomal subunit protein bL12 (131 aa).

Belongs to the bacterial ribosomal protein bL12 family. In terms of assembly, homodimer. Part of the ribosomal stalk of the 50S ribosomal subunit. Forms a multimeric L10(L12)X complex, where L10 forms an elongated spine to which 2 to 4 L12 dimers bind in a sequential fashion. Binds GTP-bound translation factors.

In terms of biological role, forms part of the ribosomal stalk which helps the ribosome interact with GTP-bound translation factors. Is thus essential for accurate translation. This Prochlorococcus marinus (strain NATL2A) protein is Large ribosomal subunit protein bL12.